The chain runs to 186 residues: MGVKSDIWIRNMAKNFNMISPFEEKQVRKGIISYGVSSYGYDIRVSDEFMVFTNINSTVVDPKNFDERNVVNIKGDCIIPPNSFALCRSVEYFKMPRDVLAICVGKSTYARCGIIVNVTPIEPEWEGHITIEISNTTPLPAKIYANEGIAQLIFLGADDNICETSYADKSGKYHGQKGITLPKVDK.

106-111 (KSTYAR) provides a ligand contact to dCTP. The Proton donor/acceptor role is filled by E132. 3 residues coordinate dCTP: Q151, Y166, and Q176.

Belongs to the dCTP deaminase family. As to quaternary structure, homotrimer.

It carries out the reaction dCTP + H2O + H(+) = dUTP + NH4(+). It functions in the pathway pyrimidine metabolism; dUMP biosynthesis; dUMP from dCTP (dUTP route): step 1/2. Its function is as follows. Catalyzes the deamination of dCTP to dUTP. This chain is dCTP deaminase, found in Nautilia profundicola (strain ATCC BAA-1463 / DSM 18972 / AmH).